Here is a 1786-residue protein sequence, read N- to C-terminus: Protein TIC 214 (1786 aa).

6 helical membrane-spanning segments follow: residues 19–39, 68–88, 91–111, 133–153, 176–196, and 227–247; these read IINS…FSIG, FIAG…HLAL, PHTI…WNNH, VFLN…SSML, VGWL…LVWI, and IFSI…PSPI. The stretch at 1007 to 1046 forms a coiled coil; that stretch reads SLSEKKIKNLIDRKKTIRNQIEEISKEKQNLTNSCTKLRY.

It belongs to the TIC214 family. In terms of assembly, part of the Tic complex. Component of the 1-MD complex, composed of TIC20-I, TIC214, TIC100 and TIC56. Interacts with the translocating preproteins. Hydrolysis of ATP is essential for the formation of this complex. The 1-MD complex interacts with TIC21.

The protein resides in the plastid. Its subcellular location is the chloroplast inner membrane. Its function is as follows. Involved in protein precursor import into chloroplasts. May be part of an intermediate translocation complex acting as a protein-conducting channel at the inner envelope. The chain is Protein TIC 214 from Arabidopsis thaliana (Mouse-ear cress).